The sequence spans 151 residues: HTH-type transcriptional regulator FL11 (151 aa).

The HTH asnC-type domain maps to 5-66 (LDEIDRRIIK…IVNPEALGYS (62 aa)). A DNA-binding region (H-T-H motif) is located at residues 24 to 43 (LREISKITGLAESTIHERIK). 98 to 104 (ETTGDYD) serves as a coordination point for L-arginine. L-lysine-binding positions include asparagine 118, aspartate 122, and 133 to 135 (THT). L-arginine-binding positions include aspartate 122 and 133-135 (THT).

As to quaternary structure, homodimer. Binds DNA as a dimer and an octamer.

In the famine mode, FL11 forms dimers and acts as a repressor, leading to growth arrest. In the feast mode, in the presence of high concentrations of lysine or arginine, four dimers assemble into an octamer and cover the fl11 and lysine biosynthesis promoters. This leads to the inhibition of fl11 expression and lysine biosynthesis, decrease of the FL11 concentration in the cell, derepression of the target genes and activation of the metabolism. Functionally, DNA-binding protein involved in the repression of transcription of a large number of genes, thereby arresting growth, in response to environmental changes. The chain is HTH-type transcriptional regulator FL11 from Pyrococcus abyssi (strain GE5 / Orsay).